We begin with the raw amino-acid sequence, 439 residues long: uncharacterized protein (439 aa).

28–35 serves as a coordination point for ATP; it reads GRRRIGKT.

This is an uncharacterized protein from Methanocaldococcus jannaschii (strain ATCC 43067 / DSM 2661 / JAL-1 / JCM 10045 / NBRC 100440) (Methanococcus jannaschii).